Here is a 482-residue protein sequence, read N- to C-terminus: Exodeoxyribonuclease I (482 aa).

Residues 13 to 194 (LFYDYETFGI…TSDVYATIEL (182 aa)) form the Exonuclease domain. 3 residues coordinate Mg(2+): D16, E18, and D187. E18 contributes to the substrate binding site. The region spanning 203 to 351 (PKLFDFFFKY…LVKNVLLKKN (149 aa)) is the ExoI SH3-like domain. In terms of domain architecture, ExoI C-terminal spans 355-471 (NSLNVDLQIY…DLLKYVFKKY (117 aa)).

As to quaternary structure, monomer. Interacts with ssb (via C-terminus); this interaction stimulates the exonuclease activity by recruiting the enzyme to its substrate. It depends on Mg(2+) as a cofactor.

It carries out the reaction Exonucleolytic cleavage in the 3'- to 5'-direction to yield nucleoside 5'-phosphates.. Its function is as follows. Degrades single-stranded DNA (ssDNA) in a highly processive manner. Also functions as a DNA deoxyribophosphodiesterase that releases deoxyribose-phosphate moieties following the cleavage of DNA at an apurinic/apyrimidinic (AP) site by either an AP endonuclease or AP lyase. This is Exodeoxyribonuclease I (sbcB) from Buchnera aphidicola subsp. Schizaphis graminum (strain Sg).